The chain runs to 198 residues: Small ribosomal subunit protein uS7 (198 aa).

It belongs to the universal ribosomal protein uS7 family. Part of the 30S ribosomal subunit.

In terms of biological role, one of the primary rRNA binding proteins, it binds directly to 16S rRNA where it nucleates assembly of the head domain of the 30S subunit. Is located at the subunit interface close to the decoding center. In Nanoarchaeum equitans (strain Kin4-M), this protein is Small ribosomal subunit protein uS7.